We begin with the raw amino-acid sequence, 163 residues long: Small ribosomal subunit protein bS18c (163 aa).

Disordered regions lie at residues 1–52 (MYIS…IGPG) and 144–163 (NLRNSNQNLRNNNRNLSSDC). Residues 7-48 (PFRKSKQPFRKSKQTFHKSKQPFRKFKQPFRKSKQPFRRRSR) are compositionally biased toward basic residues.

Belongs to the bacterial ribosomal protein bS18 family. Part of the 30S ribosomal subunit.

It is found in the plastid. The protein localises to the chloroplast. This is Small ribosomal subunit protein bS18c from Sorghum bicolor (Sorghum).